Here is a 68-residue protein sequence, read N- to C-terminus: uncharacterized protein (68 aa).

This is an uncharacterized protein from Invertebrate iridescent virus 3 (IIV-3).